Reading from the N-terminus, the 307-residue chain is E3 ubiquitin-protein ligase PHF7 (307 aa).

Residues 30–68 (SPVCLLCLQEPGDPEKLGEFLQKDNLCVHYFCLILSSRL) form a C2HC pre-PHD-type zinc finger. Zn(2+)-binding residues include Cys-33, Cys-36, His-58, and Cys-61. The segment at 67–92 (RLPQKGQPNRGLHGFMPEDIKREAVR) is required for interaction and ubiquitination of the nucleosome core particle. Residues 96–145 (KICFVCKKKGAAIRCQNDQCVQNFHLPCGQERGCLSQFFGEYKSYCRKHR) form a PHD-type zinc finger. Cys-98, Cys-101, Cys-110, Cys-115, His-120, Cys-123, Cys-141, His-144, Cys-160, Cys-163, Cys-179, Cys-180, His-186, Cys-189, Cys-204, Cys-207, Cys-248, Cys-253, Cys-273, Cys-276, His-282, Cys-285, Cys-297, and Cys-300 together coordinate Zn(2+). The segment at 150-307 (IHQGSLGEES…NECLPASTTS (158 aa)) is required for interaction with ubiquitinated UBE2D2. The RING-type; degenerate zinc-finger motif lies at 160–208 (CVLCCENLSRTSVENIQSPCCSQAIYHRKCIQKYAHTSAKHFFKCPQCN). Residues 244–301 (RYRHCDAPICLYEQGRDSFEDEGRWRLILCATCGSHGTHRDCSSLRPNSKKWECNECL) form a required for association with and ubiquitination of H3 region.

As to quaternary structure, interacts with MEF2C; the interaction promotes MEF2C binding to its transcription targets. Interacts with GATA4; the interaction promotes GATA4 binding to its transcription targets. Interacts with UBE2D2; the interaction inhibits cleavage of PHF7 and promotes association of the complex with the nucleosome core particle. Expressed in Leydig cells and in developing spermatids (at protein level). Highly expressed in Sertoli cells in testis.

Its subcellular location is the nucleus. The catalysed reaction is S-ubiquitinyl-[E2 ubiquitin-conjugating enzyme]-L-cysteine + [acceptor protein]-L-lysine = [E2 ubiquitin-conjugating enzyme]-L-cysteine + N(6)-ubiquitinyl-[acceptor protein]-L-lysine.. The protein operates within protein modification; protein ubiquitination. E3 ubiquitin-protein ligase which ubiquitinates histone H3 at 'Lys-14'. Required for male fertility, via inhibition of SPOP-mediated BRDT degradation when in the presence of acetylated histone H4 in early condensing spermatids. Stabilization of BRDT allows it to facilitate histone removal in early condensing spermatids and promote the progression of histone-to-protamine exchange. Promotes the expression of steroidogenesis proteins in the testes, and as a result plays a role in maintaining testosterone levels and repressing osteoclastogenesis. Promotes transcription of cardiac enhancer genes by facilitating binding of cardiac transcription factors such as MEF2C and GATA4 to target gene promoters. Ubiquitinates histone H4. Ubiquitinates histone H2A and H3 as part of the nucleosome core particle. The polypeptide is E3 ubiquitin-protein ligase PHF7 (Mus musculus (Mouse)).